Here is a 119-residue protein sequence, read N- to C-terminus: Ribosome-binding factor A (119 aa).

Belongs to the RbfA family. Monomer. Binds 30S ribosomal subunits, but not 50S ribosomal subunits or 70S ribosomes.

It localises to the cytoplasm. One of several proteins that assist in the late maturation steps of the functional core of the 30S ribosomal subunit. Associates with free 30S ribosomal subunits (but not with 30S subunits that are part of 70S ribosomes or polysomes). Required for efficient processing of 16S rRNA. May interact with the 5'-terminal helix region of 16S rRNA. In Lactococcus lactis subsp. cremoris (strain SK11), this protein is Ribosome-binding factor A.